A 647-amino-acid chain; its full sequence is Threonine--tRNA ligase (647 aa).

One can recognise a TGS domain in the interval Met1 to Thr61. The interval Asp242–Pro540 is catalytic. Positions 336, 387, and 517 each coordinate Zn(2+).

This sequence belongs to the class-II aminoacyl-tRNA synthetase family. As to quaternary structure, homodimer. Zn(2+) serves as cofactor.

The protein resides in the cytoplasm. The enzyme catalyses tRNA(Thr) + L-threonine + ATP = L-threonyl-tRNA(Thr) + AMP + diphosphate + H(+). Its function is as follows. Catalyzes the attachment of threonine to tRNA(Thr) in a two-step reaction: L-threonine is first activated by ATP to form Thr-AMP and then transferred to the acceptor end of tRNA(Thr). Also edits incorrectly charged L-seryl-tRNA(Thr). This Streptococcus pneumoniae serotype 19F (strain G54) protein is Threonine--tRNA ligase.